We begin with the raw amino-acid sequence, 143 residues long: Large ribosomal subunit protein uL13 (143 aa).

This sequence belongs to the universal ribosomal protein uL13 family. Part of the 50S ribosomal subunit.

In terms of biological role, this protein is one of the early assembly proteins of the 50S ribosomal subunit, although it is not seen to bind rRNA by itself. It is important during the early stages of 50S assembly. The protein is Large ribosomal subunit protein uL13 of Solibacter usitatus (strain Ellin6076).